The following is a 70-amino-acid chain: MKILEKALLENDSAAEEESRNLRTKRCARKRAWCEKTENCCCPMKCIYAWYNGQSSCDHTISTIWTSCPK.

A signal peptide spans 1-26; it reads MKILEKALLENDSAAEEESRNLRTKR. Disulfide bonds link Cys27–Cys41, Cys34–Cys46, Cys40–Cys57, and Cys42–Cys68.

Expressed by the venom gland.

The protein resides in the secreted. Its function is as follows. Inhibits tetrodotoxin-sensitive sodium channels (Nav). Intracranial injection into mice causes strong convulsions and death. Intrathorax injection into crickets causes paralysis prolonged for 2 minutes, followed by recovery. The sequence is that of Delta-hexatoxin-Mg1b from Macrothele gigas (Japanese funnel web spider).